Here is a 185-residue protein sequence, read N- to C-terminus: Peptidyl-tRNA hydrolase (185 aa).

Tyr-15 provides a ligand contact to tRNA. The active-site Proton acceptor is His-20. TRNA-binding residues include Tyr-64, Asn-66, and Asn-112.

Belongs to the PTH family. In terms of assembly, monomer.

The protein resides in the cytoplasm. The catalysed reaction is an N-acyl-L-alpha-aminoacyl-tRNA + H2O = an N-acyl-L-amino acid + a tRNA + H(+). Functionally, hydrolyzes ribosome-free peptidyl-tRNAs (with 1 or more amino acids incorporated), which drop off the ribosome during protein synthesis, or as a result of ribosome stalling. Catalyzes the release of premature peptidyl moieties from peptidyl-tRNA molecules trapped in stalled 50S ribosomal subunits, and thus maintains levels of free tRNAs and 50S ribosomes. The chain is Peptidyl-tRNA hydrolase from Porphyromonas gingivalis (strain ATCC BAA-308 / W83).